We begin with the raw amino-acid sequence, 433 residues long: Phosphomethylpyrimidine synthase (433 aa).

Substrate contacts are provided by residues Asn-66, Met-94, Tyr-123, His-162, 184–186 (SRG), 225–228 (DALR), and Glu-264. Position 268 (His-268) interacts with Zn(2+). A substrate-binding site is contributed by Tyr-291. His-332 is a Zn(2+) binding site. Residues Cys-408, Cys-411, and Cys-415 each coordinate [4Fe-4S] cluster.

The protein belongs to the ThiC family. Requires [4Fe-4S] cluster as cofactor.

It carries out the reaction 5-amino-1-(5-phospho-beta-D-ribosyl)imidazole + S-adenosyl-L-methionine = 4-amino-2-methyl-5-(phosphooxymethyl)pyrimidine + CO + 5'-deoxyadenosine + formate + L-methionine + 3 H(+). It functions in the pathway cofactor biosynthesis; thiamine diphosphate biosynthesis. Functionally, catalyzes the synthesis of the hydroxymethylpyrimidine phosphate (HMP-P) moiety of thiamine from aminoimidazole ribotide (AIR) in a radical S-adenosyl-L-methionine (SAM)-dependent reaction. The chain is Phosphomethylpyrimidine synthase from Saccharolobus islandicus (strain M.14.25 / Kamchatka #1) (Sulfolobus islandicus).